The sequence spans 257 residues: Acetylglutamate kinase (257 aa).

Substrate-binding positions include 41–42 (GG), Arg-63, and Asn-158.

It belongs to the acetylglutamate kinase family. ArgB subfamily.

It localises to the cytoplasm. It catalyses the reaction N-acetyl-L-glutamate + ATP = N-acetyl-L-glutamyl 5-phosphate + ADP. Its pathway is amino-acid biosynthesis; L-arginine biosynthesis; N(2)-acetyl-L-ornithine from L-glutamate: step 2/4. Functionally, catalyzes the ATP-dependent phosphorylation of N-acetyl-L-glutamate. The polypeptide is Acetylglutamate kinase (Bacteroides thetaiotaomicron (strain ATCC 29148 / DSM 2079 / JCM 5827 / CCUG 10774 / NCTC 10582 / VPI-5482 / E50)).